Consider the following 443-residue polypeptide: 23S rRNA (uracil(1939)-C(5))-methyltransferase RlmD (443 aa).

Residues 8 to 66 form the TRAM domain; that stretch reads KPLPAEPIAAHIESFAHDGKGIAHVDGRVVFVDGALPGEDVTFVYTEIKRDYAAGRVVE. Residues cysteine 79, cysteine 85, cysteine 88, and cysteine 167 each coordinate [4Fe-4S] cluster. Positions 276, 305, 310, 326, 353, and 374 each coordinate S-adenosyl-L-methionine. Cysteine 400 functions as the Nucleophile in the catalytic mechanism.

This sequence belongs to the class I-like SAM-binding methyltransferase superfamily. RNA M5U methyltransferase family. RlmD subfamily.

The catalysed reaction is uridine(1939) in 23S rRNA + S-adenosyl-L-methionine = 5-methyluridine(1939) in 23S rRNA + S-adenosyl-L-homocysteine + H(+). Functionally, catalyzes the formation of 5-methyl-uridine at position 1939 (m5U1939) in 23S rRNA. The protein is 23S rRNA (uracil(1939)-C(5))-methyltransferase RlmD of Methylococcus capsulatus (strain ATCC 33009 / NCIMB 11132 / Bath).